A 363-amino-acid chain; its full sequence is MGFKCGIVGLPNVGKSTLFNALTKAGIEAANYPFCTIEPNTGVVPMPDPRLDALAEIVNPERVLPTTMEFVDIAGLVAGASKGEGLGNKFLANIRETDAIGHVVRCFENDDIVHVAGKIDPADDIETINTELALADLDSCERAIQRLQKRAKSGDKDAKFELSILEKILPVLENAGMIRSVALDKDELHAIKGYNFLTLKPTMYIANVNEDSFENNPYLDRVRQLAEQEGAVVVPVCAAIEAEIAELEDEEKVDFLQDLGIEEPGLNRVIRAGYRLLNLQTYFTAGVKEVRAWTVAVGATAPKAAAVIHTDFEKGFIRAEVIAYDDFIQFKGENGAKEAGKWRLEGKDYIVQDGDVMHFRFNV.

The region spanning 3–256 (FKCGIVGLPN…LEDEEKVDFL (254 aa)) is the OBG-type G domain. 12-17 (NVGKST) lines the ATP pocket. 2 residues coordinate Mg(2+): Ser16 and Thr36. The TGS domain maps to 278-361 (NLQTYFTAGV…QDGDVMHFRF (84 aa)).

This sequence belongs to the TRAFAC class OBG-HflX-like GTPase superfamily. OBG GTPase family. YchF/OLA1 subfamily. The cofactor is Mg(2+).

Its function is as follows. ATPase that binds to both the 70S ribosome and the 50S ribosomal subunit in a nucleotide-independent manner. The sequence is that of Ribosome-binding ATPase YchF from Haemophilus ducreyi (strain 35000HP / ATCC 700724).